Consider the following 130-residue polypeptide: Small ribosomal subunit protein uS8A (130 aa).

The protein belongs to the universal ribosomal protein uS8 family. In terms of assembly, component of the small ribosomal subunit (SSU). Mature ribosomes consist of a small (40S) and a large (60S) subunit. The 40S subunit contains about 32 different proteins and 1 molecule of RNA (18S). The 60S subunit contains 45 different proteins and 3 molecules of RNA (25S, 5.8S and 5S).

The protein resides in the cytoplasm. Functionally, component of the ribosome, a large ribonucleoprotein complex responsible for the synthesis of proteins in the cell. The small ribosomal subunit (SSU) binds messenger RNAs (mRNAs) and translates the encoded message by selecting cognate aminoacyl-transfer RNA (tRNA) molecules. The large subunit (LSU) contains the ribosomal catalytic site termed the peptidyl transferase center (PTC), which catalyzes the formation of peptide bonds, thereby polymerizing the amino acids delivered by tRNAs into a polypeptide chain. The nascent polypeptides leave the ribosome through a tunnel in the LSU and interact with protein factors that function in enzymatic processing, targeting, and the membrane insertion of nascent chains at the exit of the ribosomal tunnel. This is Small ribosomal subunit protein uS8A (RPS22A) from Candida albicans (strain SC5314 / ATCC MYA-2876) (Yeast).